Reading from the N-terminus, the 237-residue chain is UPF0173 metal-dependent hydrolase BruAb2_0628 (237 aa).

Belongs to the UPF0173 family.

The polypeptide is UPF0173 metal-dependent hydrolase BruAb2_0628 (Brucella abortus biovar 1 (strain 9-941)).